Reading from the N-terminus, the 629-residue chain is tRNA uridine 5-carboxymethylaminomethyl modification enzyme MnmG (629 aa).

FAD-binding positions include 13-18 (GGGHAG), Val-125, and Ser-180. NAD(+) is bound at residue 273–287 (GPRYCPSIEDKVMRF). Gln-370 provides a ligand contact to FAD.

Belongs to the MnmG family. In terms of assembly, homodimer. Heterotetramer of two MnmE and two MnmG subunits. Requires FAD as cofactor.

Its subcellular location is the cytoplasm. NAD-binding protein involved in the addition of a carboxymethylaminomethyl (cmnm) group at the wobble position (U34) of certain tRNAs, forming tRNA-cmnm(5)s(2)U34. The protein is tRNA uridine 5-carboxymethylaminomethyl modification enzyme MnmG of Salmonella dublin (strain CT_02021853).